We begin with the raw amino-acid sequence, 124 residues long: Small ribosomal subunit protein uS12c (124 aa).

The protein belongs to the universal ribosomal protein uS12 family. Part of the 30S ribosomal subunit.

Its subcellular location is the plastid. The protein resides in the chloroplast. Functionally, with S4 and S5 plays an important role in translational accuracy. Located at the interface of the 30S and 50S subunits. The chain is Small ribosomal subunit protein uS12c (rps12) from Cyanidium caldarium (Red alga).